The chain runs to 576 residues: Arginine--tRNA ligase (576 aa).

The 'HIGH' region signature appears at Pro122–His132.

Belongs to the class-I aminoacyl-tRNA synthetase family. Monomer.

The protein localises to the cytoplasm. It catalyses the reaction tRNA(Arg) + L-arginine + ATP = L-arginyl-tRNA(Arg) + AMP + diphosphate. The protein is Arginine--tRNA ligase of Photobacterium profundum (strain SS9).